Consider the following 79-residue polypeptide: Cytochrome b (79 aa).

The next 3 helical transmembrane spans lie at 1–7 (TALFLAM), 31–52 (WLIRNMHANGASFLFICIYLHI), and 67–79 (WNIGVILLLLTMM). Heme b contacts are provided by His-37 and His-51.

The protein belongs to the cytochrome b family. As to quaternary structure, the cytochrome bc1 complex contains 3 respiratory subunits (MT-CYB, CYC1 and UQCRFS1), 2 core proteins (UQCRC1 and UQCRC2) and probably 6 low-molecular weight proteins. Heme b is required as a cofactor.

The protein localises to the mitochondrion inner membrane. In terms of biological role, component of the ubiquinol-cytochrome c reductase complex (complex III or cytochrome b-c1 complex) that is part of the mitochondrial respiratory chain. The b-c1 complex mediates electron transfer from ubiquinol to cytochrome c. Contributes to the generation of a proton gradient across the mitochondrial membrane that is then used for ATP synthesis. The protein is Cytochrome b (mt-cyb) of Julidochromis regani (Convict julie).